Consider the following 346-residue polypeptide: Probable choline kinase 1 (346 aa).

ATP contacts are provided by R73, Q210, and D227.

The protein belongs to the choline/ethanolamine kinase family. Expressed in roots. Expressed at low levels in cauline leaves and flowers.

It catalyses the reaction choline + ATP = phosphocholine + ADP + H(+). Its pathway is phospholipid metabolism; phosphatidylcholine biosynthesis; phosphocholine from choline: step 1/1. In terms of biological role, involved in phospholipid biosynthesis. Catalyzes the first step in phosphatidylcholine biosynthesis. This is Probable choline kinase 1 (CK1) from Arabidopsis thaliana (Mouse-ear cress).